The sequence spans 325 residues: GTPase Era (325 aa).

The 169-residue stretch at 30 to 198 (HCGFVAIVGR…KKHVRDHLPK (169 aa)) folds into the Era-type G domain. The G1 stretch occupies residues 38-45 (GRPNVGKS). 38–45 (GRPNVGKS) is a binding site for GTP. Residues 64–68 (QTTRH) are G2. The tract at residues 85 to 88 (DTPG) is G3. Residues 85–89 (DTPGL) and 147–150 (NKVD) each bind GTP. The segment at 147-150 (NKVD) is G4. A G5 region spans residues 177–179 (ISA). The KH type-2 domain occupies 221–307 (VREKLMRFTG…YLETWVKVKS (87 aa)).

This sequence belongs to the TRAFAC class TrmE-Era-EngA-EngB-Septin-like GTPase superfamily. Era GTPase family. As to quaternary structure, monomer.

The protein resides in the cytoplasm. It localises to the cell inner membrane. Its function is as follows. An essential GTPase that binds both GDP and GTP, with rapid nucleotide exchange. Plays a role in 16S rRNA processing and 30S ribosomal subunit biogenesis and possibly also in cell cycle regulation and energy metabolism. This Vibrio cholerae serotype O1 (strain ATCC 39315 / El Tor Inaba N16961) protein is GTPase Era.